A 487-amino-acid polypeptide reads, in one-letter code: GTPase Der (487 aa).

2 consecutive EngA-type G domains span residues 5-169 (PKLA…SREI) and 178-351 (IKVA…ANSQ). GTP contacts are provided by residues 11 to 18 (GRPNVGKS), 58 to 62 (DTGGI), 121 to 124 (NKID), 184 to 191 (GRANVGKS), 231 to 235 (DTAGI), and 296 to 299 (NKWD). Residues 352-439 (KRITTHQLNK…IHLKGKTKKD (88 aa)) form the KH-like domain. A disordered region spans residues 441-466 (PVSSLSLTRKQTKSTDQENNEYDELY).

This sequence belongs to the TRAFAC class TrmE-Era-EngA-EngB-Septin-like GTPase superfamily. EngA (Der) GTPase family. In terms of assembly, associates with the 50S ribosomal subunit.

Its function is as follows. GTPase that plays an essential role in the late steps of ribosome biogenesis. This chain is GTPase Der, found in Protochlamydia amoebophila (strain UWE25).